A 362-amino-acid polypeptide reads, in one-letter code: Transcriptional repressor PifC (362 aa).

In terms of biological role, transcription repression of its own gene by binding to the PIF operator (pifO) and replication initiation from the primary origin (ori-1). Transcriptional repressor of the pifA and pifB. The polypeptide is Transcriptional repressor PifC (pifC) (Escherichia coli (strain K12)).